Here is a 129-residue protein sequence, read N- to C-terminus: UPF0102 protein Clim_0016 (129 aa).

Belongs to the UPF0102 family.

The protein is UPF0102 protein Clim_0016 of Chlorobium limicola (strain DSM 245 / NBRC 103803 / 6330).